We begin with the raw amino-acid sequence, 619 residues long: Zinc finger protein 668 (619 aa).

Position 1 is an N-acetylmethionine (M1). Position 10 is a phosphoserine (S10). The segment at 22–44 adopts a C2H2-type 1 zinc-finger fold; that stretch reads YKCLFCTKTFPNAPRAARHAATH. Residues 36-74 are disordered; it reads RAARHAATHTPTDCTEEVREAQPKVDTEPKAEEASGDKV. The segment covering 51–71 has biased composition (basic and acidic residues); that stretch reads EEVREAQPKVDTEPKAEEASG. Residues K59, K65, and K80 each participate in a glycyl lysine isopeptide (Lys-Gly) (interchain with G-Cter in SUMO2) cross-link. 11 consecutive C2H2-type zinc fingers follow at residues 84–106, 112–134, 140–162, 168–190, 196–218, 224–246, 252–274, 280–302, 308–330, 336–358, and 364–386; these read YACP…GRSH, FPCP…LASH, FRCT…QRGH, YACP…RRTH, YSCE…ERSH, FLCS…QRIH, YRCP…ERTH, FLCP…QRAH, YRCE…RRVH, FKCL…ALVH, and FRCE…SRMH. A Glycyl lysine isopeptide (Lys-Gly) (interchain with G-Cter in SUMO2) cross-link involves residue K154. The residue at position 387 (S387) is a Phosphoserine. A C2H2-type 13 zinc finger spans residues 392-414; it reads FHCNACGKSFVVLSSLRKHERTH. The interval 491 to 513 is disordered; the sequence is VGEAPSTLGDAGEVGGEETDEKP. K512 is covalently cross-linked (Glycyl lysine isopeptide (Lys-Gly) (interchain with G-Cter in SUMO2)). C2H2-type zinc fingers lie at residues 516 to 538, 544 to 566, and 572 to 594; these read FVCR…ERSH, FPCT…SRTH, and YSCS…ERTH.

Belongs to the krueppel C2H2-type zinc-finger protein family.

The protein resides in the nucleus. May be involved in transcriptional regulation. May play a role in DNA repair process. The polypeptide is Zinc finger protein 668 (Znf668) (Mus musculus (Mouse)).